We begin with the raw amino-acid sequence, 347 residues long: Cytoplasmic tRNA 2-thiolation protein 1 (347 aa).

At S200 the chain carries Phosphoserine. Residues 315–347 are disordered; it reads LAIGKGRRGLDEEGPPREPQPSRPLTSEPVPDF.

Belongs to the TtcA family. CTU1/NCS6/ATPBD3 subfamily. As to quaternary structure, component of a complex at least composed of URM1, CTU2/NCS2 and CTU1/ATPBD3. May form a heterodimer with CTU2/NCS2.

The protein resides in the cytoplasm. It functions in the pathway tRNA modification; 5-methoxycarbonylmethyl-2-thiouridine-tRNA biosynthesis. Plays a central role in 2-thiolation of mcm(5)S(2)U at tRNA wobble positions of tRNA(Lys), tRNA(Glu) and tRNA(Gln). Directly binds tRNAs and probably acts by catalyzing adenylation of tRNAs, an intermediate required for 2-thiolation. It is unclear whether it acts as a sulfurtransferase that transfers sulfur from thiocarboxylated URM1 onto the uridine of tRNAs at wobble position. This Bos taurus (Bovine) protein is Cytoplasmic tRNA 2-thiolation protein 1.